The following is a 630-amino-acid chain: Golgi apyrase (630 aa).

Residues 1–500 are Lumenal-facing; that stretch reads MLIENTNDRF…RKQSSSLSNK (500 aa). Glu152 (proton acceptor) is an active-site residue. Residues 501–517 form a helical membrane-spanning segment; that stretch reads GFLMWFAIICCIFYLIF. At 518 to 630 the chain is on the cytoplasmic side; it reads HRSHIIRRRF…SKFKDSRLYD (113 aa). The tract at residues 586-606 is disordered; it reads SSATMQREHEPQRTASQSANL.

This sequence belongs to the GDA1/CD39 NTPase family. Interacts with activator subunit VMA13 of vacuolar H(+)-ATPase. Interacts with CDC55; this interaction is disrupted by adenovirus E4orf4, which remains associated with both YND1 and CDC55. Ca(2+) is required as a cofactor. Mg(2+) serves as cofactor. The cofactor is Mn(2+).

It localises to the golgi apparatus. The protein localises to the membrane. The enzyme catalyses a ribonucleoside 5'-triphosphate + 2 H2O = a ribonucleoside 5'-phosphate + 2 phosphate + 2 H(+). It functions in the pathway protein modification; protein glycosylation. Activity is inhibited both by interaction with VMA13 and by V-ATPase acidification of the lumen. The activity of VMA13 is not required for YND1 inhibition. In terms of biological role, catalyzes the hydrolysis of phosphoanhydride bonds of nucleoside tri- and di-phosphates. Has equal high activity toward ADP/ATP, GDP/GTP, and UDP/UTP and approximately 50% less toward CDP/CTP and thiamine pyrophosphate. Has no activity toward GMP. Required for Golgi glycosylation and cell wall integrity. Together with CDC55, required for adenovirus E4orf4 (early region 4 open reading frame 4) induced toxicity, the apyrase activity is not required for this function. Plays a role in sphingolipid synthesis. This is Golgi apyrase (YND1) from Saccharomyces cerevisiae (strain ATCC 204508 / S288c) (Baker's yeast).